Reading from the N-terminus, the 126-residue chain is Large ribosomal subunit protein bL17 (126 aa).

The protein belongs to the bacterial ribosomal protein bL17 family. In terms of assembly, part of the 50S ribosomal subunit. Contacts protein L32.

This chain is Large ribosomal subunit protein bL17, found in Coxiella burnetii (strain CbuG_Q212) (Coxiella burnetii (strain Q212)).